Reading from the N-terminus, the 175-residue chain is CDP-archaeol synthase (175 aa).

4 helical membrane passes run 41 to 61 (GLFS…WLSS), 82 to 102 (LIVV…KSFF), 122 to 142 (FVVG…VSNF), and 150 to 170 (VIII…LIGV).

Belongs to the CDP-archaeol synthase family. Requires Mg(2+) as cofactor.

It localises to the cell membrane. It carries out the reaction 2,3-bis-O-(geranylgeranyl)-sn-glycerol 1-phosphate + CTP + H(+) = CDP-2,3-bis-O-(geranylgeranyl)-sn-glycerol + diphosphate. It functions in the pathway membrane lipid metabolism; glycerophospholipid metabolism. Functionally, catalyzes the formation of CDP-2,3-bis-(O-geranylgeranyl)-sn-glycerol (CDP-archaeol) from 2,3-bis-(O-geranylgeranyl)-sn-glycerol 1-phosphate (DGGGP) and CTP. This reaction is the third ether-bond-formation step in the biosynthesis of archaeal membrane lipids. The chain is CDP-archaeol synthase from Methanosarcina barkeri (strain Fusaro / DSM 804).